A 362-amino-acid chain; its full sequence is 3-dehydroquinate synthase (362 aa).

NAD(+) contacts are provided by residues 71–76 (DGEQYK), 105–109 (GVVGD), 129–130 (TT), lysine 142, lysine 151, and 169–172 (CLKT). The Zn(2+) site is built by glutamate 184, histidine 247, and histidine 264.

It belongs to the sugar phosphate cyclases superfamily. Dehydroquinate synthase family. Co(2+) serves as cofactor. The cofactor is Zn(2+). It depends on NAD(+) as a cofactor.

It is found in the cytoplasm. It catalyses the reaction 7-phospho-2-dehydro-3-deoxy-D-arabino-heptonate = 3-dehydroquinate + phosphate. The protein operates within metabolic intermediate biosynthesis; chorismate biosynthesis; chorismate from D-erythrose 4-phosphate and phosphoenolpyruvate: step 2/7. Functionally, catalyzes the conversion of 3-deoxy-D-arabino-heptulosonate 7-phosphate (DAHP) to dehydroquinate (DHQ). The protein is 3-dehydroquinate synthase of Escherichia coli O81 (strain ED1a).